We begin with the raw amino-acid sequence, 151 residues long: S-ribosylhomocysteine lyase (151 aa).

Fe cation-binding residues include H54, H58, and C121.

Belongs to the LuxS family. Homodimer. Fe cation is required as a cofactor.

It catalyses the reaction S-(5-deoxy-D-ribos-5-yl)-L-homocysteine = (S)-4,5-dihydroxypentane-2,3-dione + L-homocysteine. Its function is as follows. Involved in the synthesis of autoinducer 2 (AI-2) which is secreted by bacteria and is used to communicate both the cell density and the metabolic potential of the environment. The regulation of gene expression in response to changes in cell density is called quorum sensing. Catalyzes the transformation of S-ribosylhomocysteine (RHC) to homocysteine (HC) and 4,5-dihydroxy-2,3-pentadione (DPD). This chain is S-ribosylhomocysteine lyase, found in Clostridium perfringens (strain ATCC 13124 / DSM 756 / JCM 1290 / NCIMB 6125 / NCTC 8237 / Type A).